The following is a 561-amino-acid chain: Asparagine synthetase [glutamine-hydrolyzing] (561 aa).

The For GATase activity role is filled by C2. In terms of domain architecture, Glutamine amidotransferase type-2 spans 2–191 (CGIWALFGSD…PGHYEVLDLK (190 aa)). Residues 49 to 53 (RLAVV), 75 to 77 (NGE), and D97 contribute to the L-glutamine site. Positions 213–536 (HAIYDSVEKL…PGRADWLTHY (324 aa)) constitute an Asparagine synthetase domain. ATP contacts are provided by residues L256, I288, and 363–364 (SG). K385 is modified (N6-acetyllysine). T545 carries the phosphothreonine modification. S557 is modified (phosphoserine).

It carries out the reaction L-aspartate + L-glutamine + ATP + H2O = L-asparagine + L-glutamate + AMP + diphosphate + H(+). The protein operates within amino-acid biosynthesis; L-asparagine biosynthesis; L-asparagine from L-aspartate (L-Gln route): step 1/1. This is Asparagine synthetase [glutamine-hydrolyzing] (Asns) from Rattus norvegicus (Rat).